The sequence spans 288 residues: Phenazine biosynthesis-like domain-containing protein (288 aa).

Glu46 is an active-site residue.

The protein belongs to the PhzF family. As to quaternary structure, interacts with UNRIP/MAWD.

The protein is Phenazine biosynthesis-like domain-containing protein (Pbld) of Rattus norvegicus (Rat).